Consider the following 475-residue polypeptide: Ribosomal protein uS12 methylthiotransferase RimO (475 aa).

One can recognise an MTTase N-terminal domain in the interval 5–114 (RTVRLIRLGC…IAQRLEDVLA (110 aa)). [4Fe-4S] cluster is bound by residues C14, C49, C78, C174, C178, and C181. A Radical SAM core domain is found at 160-390 (LDDSPVAPLK…AGIAEEVTAD (231 aa)). Residues 393–461 (RARLGETVDV…GVDFLAAPVT (69 aa)) enclose the TRAM domain.

The protein belongs to the methylthiotransferase family. RimO subfamily. Requires [4Fe-4S] cluster as cofactor.

It localises to the cytoplasm. The enzyme catalyses L-aspartate(89)-[ribosomal protein uS12]-hydrogen + (sulfur carrier)-SH + AH2 + 2 S-adenosyl-L-methionine = 3-methylsulfanyl-L-aspartate(89)-[ribosomal protein uS12]-hydrogen + (sulfur carrier)-H + 5'-deoxyadenosine + L-methionine + A + S-adenosyl-L-homocysteine + 2 H(+). Its function is as follows. Catalyzes the methylthiolation of an aspartic acid residue of ribosomal protein uS12. The protein is Ribosomal protein uS12 methylthiotransferase RimO of Acidothermus cellulolyticus (strain ATCC 43068 / DSM 8971 / 11B).